We begin with the raw amino-acid sequence, 429 residues long: Serine--tRNA ligase (429 aa).

236–238 (TAE) lines the L-serine pocket. 267–269 (RSE) provides a ligand contact to ATP. Position 290 (E290) interacts with L-serine. Position 354-357 (354-357 (EVSS)) interacts with ATP. An L-serine-binding site is contributed by S390.

This sequence belongs to the class-II aminoacyl-tRNA synthetase family. Type-1 seryl-tRNA synthetase subfamily. Homodimer. The tRNA molecule binds across the dimer.

The protein localises to the cytoplasm. The enzyme catalyses tRNA(Ser) + L-serine + ATP = L-seryl-tRNA(Ser) + AMP + diphosphate + H(+). The catalysed reaction is tRNA(Sec) + L-serine + ATP = L-seryl-tRNA(Sec) + AMP + diphosphate + H(+). Its pathway is aminoacyl-tRNA biosynthesis; selenocysteinyl-tRNA(Sec) biosynthesis; L-seryl-tRNA(Sec) from L-serine and tRNA(Sec): step 1/1. Its function is as follows. Catalyzes the attachment of serine to tRNA(Ser). Is also able to aminoacylate tRNA(Sec) with serine, to form the misacylated tRNA L-seryl-tRNA(Sec), which will be further converted into selenocysteinyl-tRNA(Sec). This is Serine--tRNA ligase from Wigglesworthia glossinidia brevipalpis.